Reading from the N-terminus, the 301-residue chain is Glutathione transport system permease protein GsiD (301 aa).

6 consecutive transmembrane segments (helical) span residues 37-57 (VAVAAGLFVLLLIAIAFWAQY), 103-123 (LAAGIFSVLVGMMIGTTLGLL), 141-161 (VLFAFPGILLAIAVVAIMGSG), 162-182 (MANVVVAVAIFSIPAFARLVR), 220-240 (IVVFFSMRIGMSIITAASLSF), and 264-284 (VIAPHVAIFPSLAIFLTVLAF). The 190-residue stretch at 99 to 288 (TRISLAAGIF…LTVLAFNLLG (190 aa)) folds into the ABC transmembrane type-1 domain.

Belongs to the binding-protein-dependent transport system permease family. As to quaternary structure, the complex is composed of two ATP-binding proteins (GsiA), two transmembrane proteins (GsiC and GsiD) and a solute-binding protein (GsiB).

It localises to the cell inner membrane. In terms of biological role, part of the ABC transporter complex GsiABCD involved in glutathione import. Probably responsible for the translocation of the substrate across the membrane. This Pectobacterium atrosepticum (strain SCRI 1043 / ATCC BAA-672) (Erwinia carotovora subsp. atroseptica) protein is Glutathione transport system permease protein GsiD.